The following is a 156-amino-acid chain: ATP synthase subunit b (156 aa).

A helical membrane pass occupies residues 7–27; that stretch reads LFAQMIVFFVLWWVVARFVWP.

The protein belongs to the ATPase B chain family. As to quaternary structure, F-type ATPases have 2 components, F(1) - the catalytic core - and F(0) - the membrane proton channel. F(1) has five subunits: alpha(3), beta(3), gamma(1), delta(1), epsilon(1). F(0) has three main subunits: a(1), b(2) and c(10-14). The alpha and beta chains form an alternating ring which encloses part of the gamma chain. F(1) is attached to F(0) by a central stalk formed by the gamma and epsilon chains, while a peripheral stalk is formed by the delta and b chains.

It is found in the cell inner membrane. In terms of biological role, f(1)F(0) ATP synthase produces ATP from ADP in the presence of a proton or sodium gradient. F-type ATPases consist of two structural domains, F(1) containing the extramembraneous catalytic core and F(0) containing the membrane proton channel, linked together by a central stalk and a peripheral stalk. During catalysis, ATP synthesis in the catalytic domain of F(1) is coupled via a rotary mechanism of the central stalk subunits to proton translocation. Its function is as follows. Component of the F(0) channel, it forms part of the peripheral stalk, linking F(1) to F(0). The polypeptide is ATP synthase subunit b (Polynucleobacter necessarius subsp. necessarius (strain STIR1)).